A 299-amino-acid polypeptide reads, in one-letter code: 4-hydroxybenzoate octaprenyltransferase (299 aa).

Helical transmembrane passes span 33 to 53 (VGFL…ADGV), 56 to 76 (WWTL…GCVI), 107 to 127 (LLMF…MNQL), 151 to 171 (LPQV…FAAI), 180 to 200 (WLLY…YAMV), 213 to 233 (IAIL…TLML), 247 to 267 (HTYW…FIIA), and 278 to 298 (AFMH…LATT).

It belongs to the UbiA prenyltransferase family. The cofactor is Mg(2+).

It localises to the cell inner membrane. The catalysed reaction is all-trans-octaprenyl diphosphate + 4-hydroxybenzoate = 4-hydroxy-3-(all-trans-octaprenyl)benzoate + diphosphate. It participates in cofactor biosynthesis; ubiquinone biosynthesis. Functionally, catalyzes the prenylation of para-hydroxybenzoate (PHB) with an all-trans polyprenyl group. Mediates the second step in the final reaction sequence of ubiquinone-8 (UQ-8) biosynthesis, which is the condensation of the polyisoprenoid side chain with PHB, generating the first membrane-bound Q intermediate 3-octaprenyl-4-hydroxybenzoate. The protein is 4-hydroxybenzoate octaprenyltransferase of Xylella fastidiosa (strain M12).